The chain runs to 358 residues: MAPGTLTELAGESKLNSKFVRDEDERPKVAYNVFSDEIPVISLAGIDDVDGKRGEICRQIVEACENWGIFQVVDHGVDTNLVADMTRLARDFFALPPEDKLRFDMSGGKKGGFIVSSHLQGEAVQDWREIVTYFSYPVRNRDYSRWPDKPEGWVKVTEEYSERLMSLACKLLEVLSEAMGLEKESLTNACVDMDQKIVVNYYPKCPQPDLTLGLKRHTDPGTITLLLQDQVGGLQATRDNGKTWITVQPVEGAFVVNLGDHGHFLSNGRFKNADHQAVVNSNSSRLSIATFQNPAPDATVYPLKVREGEKAILEEPITFAEMYKRKMGRDLELARLKKLAKEERDHKEVDKPVDQIFA.

Residues cysteine 190–proline 294 form the Fe2OG dioxygenase domain. Residues histidine 217, aspartate 219, and histidine 275 each contribute to the Fe cation site. Arginine 285 serves as a coordination point for 2-oxoglutarate.

The protein belongs to the iron/ascorbate-dependent oxidoreductase family. Interacts with Dihydroflavonol-4-reductase (TT3), chalcone synthase (TT4) and chalcone isomerase (TT5) to form a flavonoid enzyme complex. It depends on Fe(2+) as a cofactor. L-ascorbate serves as cofactor.

It catalyses the reaction a (2S)-flavan-4-one + 2-oxoglutarate + O2 = a (2R,3R)-dihydroflavonol + succinate + CO2. The protein operates within secondary metabolite biosynthesis; flavonoid biosynthesis. In terms of biological role, catalyzes the 3-beta-hydroxylation of 2S-flavanones to 2R,3R-dihydroflavonols which are intermediates in the biosynthesis of flavonols, anthocyanidins, catechins and proanthocyanidins in plants. The chain is Naringenin,2-oxoglutarate 3-dioxygenase (F3H) from Arabidopsis thaliana (Mouse-ear cress).